Consider the following 142-residue polypeptide: Large ribosomal subunit protein uL13 (142 aa).

The protein belongs to the universal ribosomal protein uL13 family. Part of the 50S ribosomal subunit.

Functionally, this protein is one of the early assembly proteins of the 50S ribosomal subunit, although it is not seen to bind rRNA by itself. It is important during the early stages of 50S assembly. This Pyrococcus horikoshii (strain ATCC 700860 / DSM 12428 / JCM 9974 / NBRC 100139 / OT-3) protein is Large ribosomal subunit protein uL13.